We begin with the raw amino-acid sequence, 375 residues long: Actin (375 aa).

Belongs to the actin family.

Its subcellular location is the cytoplasm. It is found in the cytoskeleton. It carries out the reaction ATP + H2O = ADP + phosphate + H(+). Actins are highly conserved proteins that are involved in various types of cell motility and are ubiquitously expressed in all eukaryotic cells. The protein is Actin of Giardia intestinalis (Giardia lamblia).